Reading from the N-terminus, the 916-residue chain is Oxoglutarate dehydrogenase (916 aa).

Belongs to the alpha-ketoglutarate dehydrogenase family. Homodimer. Part of the 2-oxoglutarate dehydrogenase (OGDH) complex composed of E1 (2-oxoglutarate dehydrogenase), E2 (dihydrolipoamide succinyltransferase) and E3 (dihydrolipoamide dehydrogenase); the complex contains multiple copies of the three enzymatic components (E1, E2 and E3). It depends on thiamine diphosphate as a cofactor.

The enzyme catalyses N(6)-[(R)-lipoyl]-L-lysyl-[protein] + 2-oxoglutarate + H(+) = N(6)-[(R)-S(8)-succinyldihydrolipoyl]-L-lysyl-[protein] + CO2. Its function is as follows. E1 component of the 2-oxoglutarate dehydrogenase (OGDH) complex which catalyzes the decarboxylation of 2-oxoglutarate, the first step in the conversion of 2-oxoglutarate to succinyl-CoA and CO(2). The protein is Oxoglutarate dehydrogenase (sucA) of Buchnera aphidicola subsp. Baizongia pistaciae (strain Bp).